We begin with the raw amino-acid sequence, 290 residues long: Protein translocase subunit SecF (290 aa).

The next 6 membrane-spanning stretches (helical) occupy residues 15–35 (VFMILSLLFVIIGMYFFFTKG), 131–151 (KAILAAVLAIIVMLVYITVRF), 156–176 (AISAIINEAFVLLATISIFAI), 184–204 (SFIAAILTLLGYAINDNIIVF), 234–256 (TLYTVITTLLAITPLLIWGGVVL), and 260–282 (ILAIYLGIIIGTYSTIYIASAIL).

Belongs to the SecD/SecF family. SecF subfamily. Forms a complex with SecD. Part of the essential Sec protein translocation apparatus which comprises SecA, SecYEG and auxiliary proteins SecDF. Other proteins may also be involved.

Its subcellular location is the cell inner membrane. Functionally, part of the Sec protein translocase complex. Interacts with the SecYEG preprotein conducting channel. SecDF uses the proton motive force (PMF) to complete protein translocation after the ATP-dependent function of SecA. This chain is Protein translocase subunit SecF, found in Dictyoglomus turgidum (strain DSM 6724 / Z-1310).